Reading from the N-terminus, the 1501-residue chain is Protein SNQ2 (1501 aa).

A compositionally biased stretch (polar residues) spans 1–17; that stretch reads MSNIKSTQDSSHNAVAR. The disordered stretch occupies residues 1-56; it reads MSNIKSTQDSSHNAVARSSSASFAASEESFTGITHDKDEQSDTPADKLTKMLTGPA. At serine 2 the chain carries N-acetylserine. Residues 18–30 show a composition bias toward low complexity; that stretch reads SSSASFAASEESF. A phosphoserine mark is found at serine 26 and serine 29. The segment covering 34-49 has biased composition (basic and acidic residues); sequence THDKDEQSDTPADKLT. Residues serine 64, serine 80, and serine 86 each carry the phosphoserine modification. Residues 161–410 enclose the ABC transporter 1 domain; the sequence is FKGIKAKRHQ…FAKMGYLCPP (250 aa). 3 N-linked (GlcNAc...) asparagine glycosylation sites follow: asparagine 273, asparagine 334, and asparagine 518. 5 consecutive transmembrane segments (helical) span residues 521–541, 554–574, 600–620, 628–648, and 664–680; these read YTVI…SLFY, GGVL…NISF, LASF…LFFL, GSFF…NGLF, and ISGI…TYMI. An N-linked (GlcNAc...) asparagine glycan is attached at asparagine 730. The chain crosses the membrane as a helical span at residues 771-789; it reads FGILWCFLLGYVVLKVIFT. An ABC transporter 2 domain is found at 853 to 1095; the sequence is FIWKDVCFTI…ILNYFERNGA (243 aa). A glycan (N-linked (GlcNAc...) asparagine) is linked at asparagine 874. 889 to 896 contacts ATP; that stretch reads GESGAGKT. The residue at position 1153 (threonine 1153) is a Phosphothreonine. Helical transmembrane passes span 1190–1212, 1216–1236, 1277–1296, and 1333–1352; these read IMSK…FNVG, VGLQ…APAM, HLFF…RIFF, and ANVI…GVTQ. Asparagine 1401 is a glycosylation site (N-linked (GlcNAc...) asparagine). Residues 1455-1475 traverse the membrane as a helical segment; it reads FGIFWIYIFFNIIAMVCVYYL.

Belongs to the ABC transporter superfamily. ABCG family. PDR (TC 3.A.1.205) subfamily.

Its subcellular location is the membrane. In terms of biological role, could be an ATP-dependent permease. Confers hyper-resistance to the mutagens 4-nitroquinoline-N-oxide (4-NQO) and triaziquone, as well as to the chemicals sulphomethuron methyl phenanthroline when present in multiple copies. Exhibits nucleoside triphosphatase activity. This is Protein SNQ2 (SNQ2) from Saccharomyces cerevisiae (strain ATCC 204508 / S288c) (Baker's yeast).